The chain runs to 71 residues: Antitoxin ParD2 (71 aa).

Functionally, antitoxin component of a type II toxin-antitoxin (TA) system. The sequence is that of Antitoxin ParD2 (parD2) from Mycobacterium tuberculosis (strain CDC 1551 / Oshkosh).